Here is a 118-residue protein sequence, read N- to C-terminus: HTH-type transcriptional regulator SarT (118 aa).

A DNA-binding region (H-T-H motif) is located at residues 55–78 (MRDIISYIGIDQSRIVKSVKDLSK).

This sequence belongs to the SarA family.

It localises to the cytoplasm. Transcriptional regulator acting as an intermediary between major regulators sarA and agr and virulence genes. Represses alpha-hemolysin (hla) gene expression. Down-regulates agr RNAIII expression by repressing sarU, a positive activator of agr expression. Up-regulates sarS, which induces the expression of the cell wall-associated protein A (spa). This chain is HTH-type transcriptional regulator SarT (sarT), found in Staphylococcus aureus (strain NCTC 8325 / PS 47).